The sequence spans 212 residues: RNA chaperone ProQ (212 aa).

Residues 114 to 149 (RIAKAGKTSAPAANAKKPVKKPVARRPKAAPSAKPV) are disordered. Over residues 118–129 (AGKTSAPAANAK) the composition is skewed to low complexity. Residues 130-141 (KPVKKPVARRPK) show a composition bias toward basic residues.

The protein belongs to the ProQ family.

The protein localises to the cytoplasm. Functionally, RNA chaperone with significant RNA binding, RNA strand exchange and RNA duplexing activities. In Shewanella piezotolerans (strain WP3 / JCM 13877), this protein is RNA chaperone ProQ.